A 301-amino-acid polypeptide reads, in one-letter code: Homoserine O-acetyltransferase (301 aa).

Residue Cys142 is the Acyl-thioester intermediate of the active site. The substrate site is built by Lys163 and Ser192. Catalysis depends on His235, which acts as the Proton acceptor. The active site involves Glu237. Arg249 contributes to the substrate binding site.

This sequence belongs to the MetA family.

The protein resides in the cytoplasm. It carries out the reaction L-homoserine + acetyl-CoA = O-acetyl-L-homoserine + CoA. Its pathway is amino-acid biosynthesis; L-methionine biosynthesis via de novo pathway; O-acetyl-L-homoserine from L-homoserine: step 1/1. In terms of biological role, transfers an acetyl group from acetyl-CoA to L-homoserine, forming acetyl-L-homoserine. In Lachnoclostridium phytofermentans (strain ATCC 700394 / DSM 18823 / ISDg) (Clostridium phytofermentans), this protein is Homoserine O-acetyltransferase.